The primary structure comprises 284 residues: Bifunctional protein FolD 1 (284 aa).

Residues 166–168 (GAS) and Ile-232 each bind NADP(+).

The protein belongs to the tetrahydrofolate dehydrogenase/cyclohydrolase family. Homodimer.

It carries out the reaction (6R)-5,10-methylene-5,6,7,8-tetrahydrofolate + NADP(+) = (6R)-5,10-methenyltetrahydrofolate + NADPH. The catalysed reaction is (6R)-5,10-methenyltetrahydrofolate + H2O = (6R)-10-formyltetrahydrofolate + H(+). It participates in one-carbon metabolism; tetrahydrofolate interconversion. Catalyzes the oxidation of 5,10-methylenetetrahydrofolate to 5,10-methenyltetrahydrofolate and then the hydrolysis of 5,10-methenyltetrahydrofolate to 10-formyltetrahydrofolate. This chain is Bifunctional protein FolD 1, found in Pseudomonas savastanoi pv. phaseolicola (strain 1448A / Race 6) (Pseudomonas syringae pv. phaseolicola (strain 1448A / Race 6)).